Consider the following 37-residue polypeptide: Cortex morphogenetic protein A (37 aa).

As to quaternary structure, can form a complex with SpoIVA and ClpX.

It localises to the forespore. Functionally, ensures proper spore envelope assembly. Represses premature cortex assembly until coat assembly successfully initiates. Also participates in a quality-control pathway that selectively removes defective sporulating cells through regulated cell death. Acts as an adaptator that delivers SpoIVA to the ClpXP proteolytic machinery for degradation, specifically in cells that improperly assemble the spore envelope. The chain is Cortex morphogenetic protein A from Bacillus subtilis (strain 168).